The following is a 185-amino-acid chain: Early nodulin-like protein 17 (185 aa).

The N-terminal stretch at 1–21 is a signal peptide; the sequence is MARRDQLVSFLCFFLIVSAVA. The 101-residue stretch at 37–137 folds into the Phytocyanin domain; sequence KQYVVGGRSG…GQRLMINVDS (101 aa). 2 N-linked (GlcNAc...) asparagine glycosylation sites follow: N79 and N94. A disulfide bridge links C93 with C125. The tract at residues 136–155 is disordered; that stretch reads DSAPSPSPSPSPAPQEAATA. S156 carries the GPI-anchor amidated serine lipid modification. The propeptide at 157 to 185 is removed in mature form; the sequence is AATSSSAATAAHALLLAAMAMMGLILGEW.

This sequence belongs to the early nodulin-like (ENODL) family. Expressed ubiquitously. Accumulates mainly in anthers, stigmas and ovaries.

Its subcellular location is the cell membrane. Its function is as follows. May act as a carbohydrate transporter. Required for male fertility and seed yield. In Oryza sativa subsp. japonica (Rice), this protein is Early nodulin-like protein 17.